A 265-amino-acid chain; its full sequence is Imidazole glycerol phosphate synthase subunit HisF (265 aa).

Active-site residues include aspartate 17 and aspartate 136.

The protein belongs to the HisA/HisF family. As to quaternary structure, heterodimer of HisH and HisF.

The protein localises to the cytoplasm. It carries out the reaction 5-[(5-phospho-1-deoxy-D-ribulos-1-ylimino)methylamino]-1-(5-phospho-beta-D-ribosyl)imidazole-4-carboxamide + L-glutamine = D-erythro-1-(imidazol-4-yl)glycerol 3-phosphate + 5-amino-1-(5-phospho-beta-D-ribosyl)imidazole-4-carboxamide + L-glutamate + H(+). The protein operates within amino-acid biosynthesis; L-histidine biosynthesis; L-histidine from 5-phospho-alpha-D-ribose 1-diphosphate: step 5/9. In terms of biological role, IGPS catalyzes the conversion of PRFAR and glutamine to IGP, AICAR and glutamate. The HisF subunit catalyzes the cyclization activity that produces IGP and AICAR from PRFAR using the ammonia provided by the HisH subunit. The protein is Imidazole glycerol phosphate synthase subunit HisF of Mycolicibacterium paratuberculosis (strain ATCC BAA-968 / K-10) (Mycobacterium paratuberculosis).